A 511-amino-acid chain; its full sequence is MTITLHPGSVSLKQLAEIYWSGEPAKLDASFDAGILKAAARIAEIAAGNAPVYGINTGFGKLASIKIDSADVATLQRNLILSHCCGVGQPLPENVVRLIMSLKLVSLGRGASGVRLELVRLIEGMLAKGVVPVIPEKGSVGASGDLAPLAHMTAVMMGHGEAFYAGERLDGAAALEKAGLTPVVLAAKEGLALINGTQVSTALALAGLFRAHRAAQAALITGAMSTDAAMGSSAPFHPDIHTLRGHQGQIDTAAALRGLLAGSVIRESHIEGDERVQDPYCIRCQPQVDGACLDLLRSVGRTLEIEANAVTDNPLVLSDNSVVSGGNFHAEPVAFAADQIAIAVCEIGAISQRRIALLVDPALSYGLPAFLAKKPGLNSGLMIAEVTSAALMSENKQMSHPASVDSTPTSANQEDHVSMACHGARRLLQMTDNLFGIVGIEALTAAQGVEFRAPLATSPELTLAIATIRSVVPTLDVDRYMANDLKAASDLVASGALNASVSADILPSLEI.

The segment at residues 142–144 (ASG) is a cross-link (5-imidazolinone (Ala-Gly)). 2,3-didehydroalanine (Ser) is present on S143.

It belongs to the PAL/histidase family. In terms of processing, contains an active site 4-methylidene-imidazol-5-one (MIO), which is formed autocatalytically by cyclization and dehydration of residues Ala-Ser-Gly.

The protein localises to the cytoplasm. The enzyme catalyses L-histidine = trans-urocanate + NH4(+). The protein operates within amino-acid degradation; L-histidine degradation into L-glutamate; N-formimidoyl-L-glutamate from L-histidine: step 1/3. This Rhizobium rhizogenes (strain K84 / ATCC BAA-868) (Agrobacterium radiobacter) protein is Histidine ammonia-lyase.